The following is a 117-amino-acid chain: DNA polymerase epsilon subunit 4 (117 aa).

The disordered stretch occupies residues Met1–Ala36. N-acetylalanine is present on Ala2. Thr11 is subject to Phosphothreonine. Low complexity predominate over residues Ala19 to Pro30. Phosphoserine is present on Ser25.

As to quaternary structure, component of the DNA polymerase epsilon complex consisting of four subunits: the catalytic subunit POLE and the accessory subunits POLE2, POLE3 and POLE4. Interaction with POLE3 is a prerequisite for further binding with POLE and POLE2.

It localises to the nucleus. Its function is as follows. Accessory component of the DNA polymerase epsilon complex. Participates in DNA repair and in chromosomal DNA replication. The chain is DNA polymerase epsilon subunit 4 (POLE4) from Homo sapiens (Human).